The following is a 344-amino-acid chain: MIDFVKSRDTVIQKSFFEEFNSQNREMGSFAYSGNSESVWTGENITSIWKTILINETGSYCVAARPMTMDGAEFNLDLMGYSVSEDQINNDEIGIWNYISVAEMGGVLLFLSYWIWTCLHFSKIIFPAQKVICLYIFLFALNQTLQECIEEYVFSSECIKYRQFYSVYEIIDFLRTNFYRLFVIYCALGFGITRTVPKYLMIKGISIVIALCSVYWISLYKDVYVVSEIFDMIQYEVSPAIWVYSICHLLKQCTSVTTYENASKARFFRRMLNAFIFIFCASPMLHYLSNIIFGNFDYRLSVIIGDLFTFMEKIAFPCYIMFPTHNEALAYNRNVAEEAQEKMI.

The Cytoplasmic portion of the chain corresponds to Met1–Tyr98. A helical transmembrane segment spans residues Ile99–Leu119. A topological domain (lumenal) is located at residue His120. Residues Phe121–Leu141 traverse the membrane as a helical segment. The Cytoplasmic portion of the chain corresponds to Asn142 to Lys198. The chain crosses the membrane as a helical span at residues Tyr199–Leu219. Topologically, residues Tyr220–Asp222 are lumenal. The chain crosses the membrane as a helical span at residues Val223–Val243. Residues Tyr244–Asn273 are Cytoplasmic-facing. A helical membrane pass occupies residues Ala274–Gly294. Residues Asn295–Ile344 are Lumenal-facing.

This sequence belongs to the UPF0742 family.

Its subcellular location is the endoplasmic reticulum. It localises to the membrane. This is an uncharacterized protein from Schizosaccharomyces pombe (strain 972 / ATCC 24843) (Fission yeast).